Consider the following 100-residue polypeptide: Putative pterin-4-alpha-carbinolamine dehydratase 2 (100 aa).

This sequence belongs to the pterin-4-alpha-carbinolamine dehydratase family.

It catalyses the reaction (4aS,6R)-4a-hydroxy-L-erythro-5,6,7,8-tetrahydrobiopterin = (6R)-L-erythro-6,7-dihydrobiopterin + H2O. The polypeptide is Putative pterin-4-alpha-carbinolamine dehydratase 2 (Cupriavidus pinatubonensis (strain JMP 134 / LMG 1197) (Cupriavidus necator (strain JMP 134))).